The primary structure comprises 378 residues: Probable S-(hydroxymethyl)glutathione dehydrogenase 1 (378 aa).

Zn(2+) is bound at residue cysteine 47. Histidine 48 contacts NAD(+). 7 residues coordinate Zn(2+): histidine 69, glutamate 70, cysteine 99, cysteine 102, cysteine 105, cysteine 113, and cysteine 176. Residues 201-206 (GCGCVG), aspartate 225, 293-295 (IGV), and 318-320 (SAF) contribute to the NAD(+) site.

This sequence belongs to the zinc-containing alcohol dehydrogenase family. Class-III subfamily. Requires Zn(2+) as cofactor.

It catalyses the reaction a primary alcohol + NAD(+) = an aldehyde + NADH + H(+). The catalysed reaction is a secondary alcohol + NAD(+) = a ketone + NADH + H(+). The enzyme catalyses S-(hydroxymethyl)glutathione + NADP(+) = S-formylglutathione + NADPH + H(+). It carries out the reaction S-(hydroxymethyl)glutathione + NAD(+) = S-formylglutathione + NADH + H(+). It catalyses the reaction S-nitrosoglutathione + NADH + H(+) = S-(hydroxysulfenamide)glutathione + NAD(+). In terms of biological role, oxidizes long-chain alcohols and, in the presence of glutathione, is able to oxidize formaldehyde. Also acts as a S-nitroso-glutathione reductase by catalyzing the NADH-dependent reduction of S-nitrosoglutathione, thereby regulating protein S-nitrosylation. The chain is Probable S-(hydroxymethyl)glutathione dehydrogenase 1 from Schizosaccharomyces pombe (strain 972 / ATCC 24843) (Fission yeast).